We begin with the raw amino-acid sequence, 68 residues long: MAKSGDIRVTITLECTSCTQDSVYKRFPGISRYTTRKNRRNTPIRLESNKFCPYCYKHTIHGEIKKRD.

This sequence belongs to the bacterial ribosomal protein bL33 family.

It is found in the plastid. The protein localises to the chloroplast. The polypeptide is Large ribosomal subunit protein bL33c (Pinus koraiensis (Korean pine)).